A 411-amino-acid chain; its full sequence is Dual-specificity RNA methyltransferase RlmN (411 aa).

E125 functions as the Proton acceptor in the catalytic mechanism. The Radical SAM core domain occupies 131–380 (EEGRGTLCIS…IRTPRGRDIL (250 aa)). A disulfide bridge connects residues C138 and C383. Residues C145, C149, and C152 each coordinate [4Fe-4S] cluster. Residues 209 to 210 (GE), S241, 263 to 265 (SLH), and N340 each bind S-adenosyl-L-methionine. The S-methylcysteine intermediate role is filled by C383.

It belongs to the radical SAM superfamily. RlmN family. The cofactor is [4Fe-4S] cluster.

The protein localises to the cytoplasm. The enzyme catalyses adenosine(2503) in 23S rRNA + 2 reduced [2Fe-2S]-[ferredoxin] + 2 S-adenosyl-L-methionine = 2-methyladenosine(2503) in 23S rRNA + 5'-deoxyadenosine + L-methionine + 2 oxidized [2Fe-2S]-[ferredoxin] + S-adenosyl-L-homocysteine. It catalyses the reaction adenosine(37) in tRNA + 2 reduced [2Fe-2S]-[ferredoxin] + 2 S-adenosyl-L-methionine = 2-methyladenosine(37) in tRNA + 5'-deoxyadenosine + L-methionine + 2 oxidized [2Fe-2S]-[ferredoxin] + S-adenosyl-L-homocysteine. Its function is as follows. Specifically methylates position 2 of adenine 2503 in 23S rRNA and position 2 of adenine 37 in tRNAs. m2A2503 modification seems to play a crucial role in the proofreading step occurring at the peptidyl transferase center and thus would serve to optimize ribosomal fidelity. The chain is Dual-specificity RNA methyltransferase RlmN from Brucella abortus (strain S19).